The sequence spans 227 residues: 2,3-bisphosphoglycerate-dependent phosphoglycerate mutase (227 aa).

Substrate contacts are provided by residues 7 to 14, 20 to 21, Arg59, 86 to 89, Lys97, 113 to 114, and 182 to 183; these read RHGFSEWN, TG, ERHY, RR, and GN. The Tele-phosphohistidine intermediate role is filled by His8. Glu86 functions as the Proton donor/acceptor in the catalytic mechanism.

This sequence belongs to the phosphoglycerate mutase family. BPG-dependent PGAM subfamily. Homodimer.

It catalyses the reaction (2R)-2-phosphoglycerate = (2R)-3-phosphoglycerate. The protein operates within carbohydrate degradation; glycolysis; pyruvate from D-glyceraldehyde 3-phosphate: step 3/5. Functionally, catalyzes the interconversion of 2-phosphoglycerate and 3-phosphoglycerate. In Haemophilus influenzae (strain ATCC 51907 / DSM 11121 / KW20 / Rd), this protein is 2,3-bisphosphoglycerate-dependent phosphoglycerate mutase.